The chain runs to 321 residues: tRNA-5-methyluridine(54) 2-sulfurtransferase (321 aa).

Zn(2+) contacts are provided by Cys3, Cys6, Cys22, and His25. Residues 53-55, Asp59, and Ile79 contribute to the ATP site; that span reads AVS. Positions 130 and 133 each coordinate [4Fe-4S] cluster. Lys137 participates in a covalent cross-link: Glycyl lysine isopeptide (Lys-Gly) (interchain with G-Cter in TtuB). ATP is bound by residues Gly156 and Asp161. Cys222 is a [4Fe-4S] cluster binding site. Glycyl lysine isopeptide (Lys-Gly) (interchain with G-Cter in TtuB) cross-links involve residues Lys226 and Lys229. Positions 274, 277, 286, and 289 each coordinate Zn(2+).

It belongs to the TtcA family. TtuA subfamily. As to quaternary structure, homodimer. Is able to form a heterocomplex with TtuB. The cofactor is [4Fe-4S] cluster. Requires Mg(2+) as cofactor. In terms of processing, conjugated to TtuB via covalent linkages involving Lys-137, Lys-226 and Lys-229.

It carries out the reaction [TtuB sulfur-carrier protein]-C-terminal-Gly-aminoethanethioate + 5-methyluridine(54) in tRNA + ATP + H2O = [TtuB sulfur-carrier protein]-C-terminal Gly-Gly + 5-methyl-2-thiouridine(54) in tRNA + AMP + diphosphate + H(+). The protein operates within tRNA modification. Enzymatic activity may be regulated by TtuB conjugation. Catalyzes the ATP-dependent 2-thiolation of 5-methyluridine residue at position 54 in the T loop of tRNAs, leading to 5-methyl-2-thiouridine (m(5)s(2)U or s(2)T). This modification allows thermal stabilization of tRNAs in thermophilic microorganisms, and is required for cell growth at high temperatures. TtuA transfers the S atom from the thiocarboxylated C-terminus of TtuB to tRNA. This Thermus thermophilus (strain ATCC BAA-163 / DSM 7039 / HB27) protein is tRNA-5-methyluridine(54) 2-sulfurtransferase.